The following is a 342-amino-acid chain: Ferredoxin--NADP reductase (342 aa).

FAD is bound by residues C17, D36, Q44, Y49, I89, F124, D289, and T330.

The protein belongs to the ferredoxin--NADP reductase type 2 family. As to quaternary structure, homodimer. It depends on FAD as a cofactor.

It catalyses the reaction 2 reduced [2Fe-2S]-[ferredoxin] + NADP(+) + H(+) = 2 oxidized [2Fe-2S]-[ferredoxin] + NADPH. The polypeptide is Ferredoxin--NADP reductase (Rhodopseudomonas palustris (strain HaA2)).